Here is a 199-residue protein sequence, read N- to C-terminus: Translation initiation factor IF-3 (199 aa).

Belongs to the IF-3 family. Monomer.

It localises to the cytoplasm. In terms of biological role, IF-3 binds to the 30S ribosomal subunit and shifts the equilibrium between 70S ribosomes and their 50S and 30S subunits in favor of the free subunits, thus enhancing the availability of 30S subunits on which protein synthesis initiation begins. This Gloeobacter violaceus (strain ATCC 29082 / PCC 7421) protein is Translation initiation factor IF-3.